The primary structure comprises 274 residues: Large ribosomal subunit protein uL2cz/uL2cy (274 aa).

2 disordered regions span residues 1-26 (MAIH…KSNP) and 223-274 (MNPV…RRSK).

This sequence belongs to the universal ribosomal protein uL2 family. As to quaternary structure, part of the 50S ribosomal subunit.

It localises to the plastid. Its subcellular location is the chloroplast. This Daucus carota (Wild carrot) protein is Large ribosomal subunit protein uL2cz/uL2cy (rpl2-A).